The sequence spans 472 residues: Putative F-box/LRR-repeat protein At5g54820 (472 aa).

An F-box domain is found at 6 to 54 (QDRLSSLPDILLIMIISFLPLKECVRTSVLSKRWRYLCLETTNLSFKES). LRR repeat units follow at residues 58 to 87 (NPDI…SITQ), 135 to 164 (NGDI…KIYG), 183 to 208 (IGWV…SIKN), 225 to 250 (VIEH…KYSG), 283 to 308 (SSRI…TVCP), and 338 to 363 (MHTK…GFDI).

The polypeptide is Putative F-box/LRR-repeat protein At5g54820 (Arabidopsis thaliana (Mouse-ear cress)).